Here is a 272-residue protein sequence, read N- to C-terminus: Urease accessory protein UreD (272 aa).

This sequence belongs to the UreD family. As to quaternary structure, ureD, UreF and UreG form a complex that acts as a GTP-hydrolysis-dependent molecular chaperone, activating the urease apoprotein by helping to assemble the nickel containing metallocenter of UreC. The UreE protein probably delivers the nickel.

The protein resides in the cytoplasm. Required for maturation of urease via the functional incorporation of the urease nickel metallocenter. In Opitutus terrae (strain DSM 11246 / JCM 15787 / PB90-1), this protein is Urease accessory protein UreD.